Here is a 420-residue protein sequence, read N- to C-terminus: DNA replication and repair protein RecF (420 aa).

An ATP-binding site is contributed by 30–37; that stretch reads GRNGQGKT. The tract at residues 175 to 214 is disordered; it reads RKGGFARKGGFAPLGPPEGRPEGPPEGRTGGSATSGPPSR.

It belongs to the RecF family.

It localises to the cytoplasm. In terms of biological role, the RecF protein is involved in DNA metabolism; it is required for DNA replication and normal SOS inducibility. RecF binds preferentially to single-stranded, linear DNA. It also seems to bind ATP. In Nocardioides sp. (strain ATCC BAA-499 / JS614), this protein is DNA replication and repair protein RecF.